The sequence spans 682 residues: MTTQPRKILVTCALPYANGAIHLGHMLEHIQADIWVRFQRMRGNKIHFVCADDAHGTPIMLNADKLGITPEELIAKAKADHMRDFAGFNISFDNYHSTHSEENKQLTAEIYNKLKANGFIKSKVISQLFDPEKNMFLPDRFVKGTCPKCKAEDQYGDNCEVCASTYSPMDLINPRSAVSGTTPIVKESEHFFFDLPAFEGMLKEWTRSGSLQSEIANKMQEWFESGLQQWDISRDTPYFGFEIPGVKDKFFYVWLDAPIGYMASFKNLCNREGIDFNEFWAEGSDAELYHFIGKDIVYFHSLFWPAMLEGSGYRKPTNVFAHGYVTVDGAKMSKSRGTFIQASTYLNHIDPECLRYYYAAKLNDRIEDLDFNLEDFVQRVNTDIVNKLVNLASRNAGFIAKRFEGKLADKLEDEALFAEFTAQAEQIAAYYESREYNKAIREIMALTDKANKYIDEKAPWVIAKEEGKEAELQAVCSMGIELFRVLMSYLKPVLPKLAERAETFLQAELRWDNIHQPLLGHTLAPFKALFSRLEKKQIDAVVEETKALFAAANKAAEKTEAKPTALSTVEPIAETITIDDFAKLDMRVAKVLKCEAVPESNKLLRFELDLGDHTRQVFSSIKAAYNKPEELEGRFVIMVANLAPRKMKFGVSEGMILSAGTGGSDLFLLSADSGVTAGMQVK.

The 'HIGH' region signature appears at 15-25 (PYANGAIHLGH). Positions 146, 149, 159, and 162 each coordinate Zn(2+). Residues 331-335 (KMSKS) carry the 'KMSKS' region motif. K334 contacts ATP. The 103-residue stretch at 580–682 (DFAKLDMRVA…SGVTAGMQVK (103 aa)) folds into the tRNA-binding domain.

It belongs to the class-I aminoacyl-tRNA synthetase family. MetG type 1 subfamily. Homodimer. It depends on Zn(2+) as a cofactor.

Its subcellular location is the cytoplasm. The enzyme catalyses tRNA(Met) + L-methionine + ATP = L-methionyl-tRNA(Met) + AMP + diphosphate. Functionally, is required not only for elongation of protein synthesis but also for the initiation of all mRNA translation through initiator tRNA(fMet) aminoacylation. The protein is Methionine--tRNA ligase of Haemophilus influenzae (strain PittEE).